The following is a 60-amino-acid chain: Large ribosomal subunit protein bL32 (60 aa).

Belongs to the bacterial ribosomal protein bL32 family.

The sequence is that of Large ribosomal subunit protein bL32 from Clostridium novyi (strain NT).